Consider the following 207-residue polypeptide: Octanoyltransferase (207 aa).

In terms of domain architecture, BPL/LPL catalytic spans 29–204 (AETRDELWVV…HLERHLSTSK (176 aa)). Residues 68–75 (RGGQITYH), 135–137 (SLG), and 148–150 (GLS) each bind substrate. Cys166 functions as the Acyl-thioester intermediate in the catalytic mechanism.

This sequence belongs to the LipB family.

Its subcellular location is the cytoplasm. The enzyme catalyses octanoyl-[ACP] + L-lysyl-[protein] = N(6)-octanoyl-L-lysyl-[protein] + holo-[ACP] + H(+). Its pathway is protein modification; protein lipoylation via endogenous pathway; protein N(6)-(lipoyl)lysine from octanoyl-[acyl-carrier-protein]: step 1/2. Functionally, catalyzes the transfer of endogenously produced octanoic acid from octanoyl-acyl-carrier-protein onto the lipoyl domains of lipoate-dependent enzymes. Lipoyl-ACP can also act as a substrate although octanoyl-ACP is likely to be the physiological substrate. This chain is Octanoyltransferase, found in Chromobacterium violaceum (strain ATCC 12472 / DSM 30191 / JCM 1249 / CCUG 213 / NBRC 12614 / NCIMB 9131 / NCTC 9757 / MK).